Reading from the N-terminus, the 300-residue chain is Protein SPEAR4 (300 aa).

Residues 1–10 (MCSKTSSVSY) show a composition bias toward polar residues. A disordered region spans residues 1–45 (MCSKTSSVSYGNREDDDNYSSLCPKKQKHNNGGKKRVPRRGPGVA). Positions 25–39 (KKQKHNNGGKKRVPR) are enriched in basic residues. The short motif at 40–48 (RGPGVAELE) is the SPL element. Positions 294–300 (IDLRLKL) match the EAR motif.

In terms of assembly, interacts with SPL and SPEAR2. As to expression, expressed in leaves.

Functionally, adapter-like transcriptional repressor recruiting TPL/TPR coepressors to inhibit TCP transcription factors. May be involved in leaf development. The polypeptide is Protein SPEAR4 (Arabidopsis thaliana (Mouse-ear cress)).